We begin with the raw amino-acid sequence, 190 residues long: Venom nerve growth factor (190 aa).

The N-terminal stretch at Phe-1–Ala-7 is a signal peptide. A propeptide spanning residues Ala-8–Arg-111 is cleaved from the precursor. Cys-125 and Cys-190 are disulfide-bonded. An N-linked (GlcNAc...) asparagine glycan is attached at Asn-134.

This sequence belongs to the NGF-beta family. Homodimer; non-covalently linked. In terms of processing, glycosylated. As to expression, expressed by the venom gland.

The protein resides in the secreted. Nerve growth factor is important for the development and maintenance of the sympathetic and sensory nervous systems. It stimulates division and differentiation of sympathetic and embryonic sensory neurons as well as basal forebrain cholinergic neurons in the brain. Its relevance in the snake venom is not clear. However, it has been shown to inhibit metalloproteinase-dependent proteolysis of platelet glycoprotein Ib alpha, suggesting a metalloproteinase inhibition to prevent metalloprotease autodigestion and/or protection against prey proteases. Binds a lipid between the two protein chains in the homodimer. The lipid-bound form promotes histamine relase from mouse mast cells, contrary to the lipid-free form. The protein is Venom nerve growth factor of Agkistrodon contortrix contortrix (Southern copperhead).